The following is a 79-amino-acid chain: uncharacterized protein (79 aa).

2 consecutive transmembrane segments (helical) span residues 28–48 (CIILSGFAGLCMAYLYYALLA) and 51–71 (VALTEAILGGAILPALFAFTV).

The protein localises to the cell membrane. This is an uncharacterized protein from Methanocaldococcus jannaschii (strain ATCC 43067 / DSM 2661 / JAL-1 / JCM 10045 / NBRC 100440) (Methanococcus jannaschii).